Consider the following 489-residue polypeptide: Glutamate--tRNA ligase (489 aa).

Positions 11–21 (PSPTGHLHIGN) match the 'HIGH' region motif. Residues 252–256 (KLSKR) carry the 'KMSKS' region motif. Lysine 255 provides a ligand contact to ATP.

The protein belongs to the class-I aminoacyl-tRNA synthetase family. Glutamate--tRNA ligase type 1 subfamily. As to quaternary structure, monomer.

It localises to the cytoplasm. It catalyses the reaction tRNA(Glu) + L-glutamate + ATP = L-glutamyl-tRNA(Glu) + AMP + diphosphate. Catalyzes the attachment of glutamate to tRNA(Glu) in a two-step reaction: glutamate is first activated by ATP to form Glu-AMP and then transferred to the acceptor end of tRNA(Glu). This chain is Glutamate--tRNA ligase, found in Oceanobacillus iheyensis (strain DSM 14371 / CIP 107618 / JCM 11309 / KCTC 3954 / HTE831).